The following is a 458-amino-acid chain: MSDHSKALHVAVLAFPFGSHAAPLLALVCRLATSNPTVRFSFLSTAQSNTHTFPSTRTNEFDNVRPYNVWDGVPEGHQISGNPHVGTGFFLKALPHNFKAGMAKAEEESGATINCLLTDAFFWFAGDLAEEMGVPWVPYWTAGACSLSAHVNTDVIRITLGSTRTTQNTNQTLNFIPGLSAVHMNDLPGGVLHGDLESPFAQMLHKMGLNLPRATAVVLNSFEELEPAITTDLKLRLQKVLHVGPPSLSSSPTSSLDESGCLLWLDKHEAASVAYISFGTIITPPPNELLALAEALRASKIPFLWSLRDHSRPIFPEGFLENVLAFGKVVSWAPQSQVLAHPSIGVFVTHCGWNSILESITGGVPMICRPFFGDQTLNSRMVQDAWRIGVRLDGGVFTKSSMMSAVELIFSREEGKKLRENIILLKQKATDAVGASGSSTENFNVLLEVIKTCKHPKS.

His20 serves as the catalytic Proton acceptor. His20 contacts an anthocyanidin. The Charge relay role is filled by Asp119. Thr141 contributes to the UDP-alpha-D-glucose binding site. Residue His150 participates in an anthocyanidin binding. Ala333, Gln335, His350, Trp353, Asn354, Ser355, and Glu358 together coordinate UDP-alpha-D-glucose. Residue Gly373 participates in an anthocyanidin binding. Positions 374 and 375 each coordinate UDP-alpha-D-glucose.

Belongs to the UDP-glycosyltransferase family. Expressed in ovaries.

It catalyses the reaction a flavonol + UDP-alpha-D-glucose = a flavonol 3-O-beta-D-glucoside + UDP + H(+). It functions in the pathway flavonoid metabolism. Catalyzes the glucosylation of quercetin. Preferentially uses UDP-glucose as sugar donor, but is also able to use UDP-gal and UDP-xyl. Is probably not required for the accumulation of anthocyanin in red-fleshed kiwifruit varieties. This chain is Flavonol 3-O-glucosyltransferase F3GT2, found in Actinidia chinensis var. chinensis (Chinese soft-hair kiwi).